Consider the following 298-residue polypeptide: HTH-type transcriptional regulator YhaJ (298 aa).

The region spanning 7–64 (LTLEALRVMDAIDRRGSFAAAADELGRVPSALSYTMQKLEEELDVVLFDRSGHRTKFT) is the HTH lysR-type domain. The segment at residues 24-43 (FAAAADELGRVPSALSYTMQ) is a DNA-binding region (H-T-H motif).

The protein belongs to the LysR transcriptional regulatory family.

Positive regulator partially required for expression of genes in the locus of effacement (LEE) large pathogenicity island (PAI). Also partially responsible for expression of neighboring gene dlsT (yhaO) during late exponential growth. Binds to DNA of promoter 1 in LEE and DNA from the dlsT promoter region. In Escherichia coli O157:H7, this protein is HTH-type transcriptional regulator YhaJ (yhaJ).